Reading from the N-terminus, the 650-residue chain is Phosphatidylinositol-3,5-bisphosphate 3-phosphatase MTMR14 (650 aa).

Positions 1-27 are disordered; that stretch reads MAGARAAAAAASAGSSASSGNQPPQEL. K194 is modified (N6-acetyllysine). An N-linked (GlcNAc...) asparagine glycan is attached at N226. C330 serves as the catalytic Phosphocysteine intermediate. Residues G333, W334, D335, R336, and R382 each coordinate a 1,2-diacyl-sn-glycero-3-phospho-(1D-myo-inositol-3,5-bisphosphate). A 1,2-diacyl-sn-glycero-3-phospho-(1D-myo-inositol-3-phosphate) contacts are provided by G333, W334, D335, R336, and R382. Residues 476–546 form a disordered region; it reads AAWRKSHSSS…PRSVDHPLPG (71 aa). At S518 the chain carries Phosphoserine. N-linked (GlcNAc...) asparagine glycosylation is present at N519. 3 positions are modified to phosphoserine: S530, S580, and S624. At R638 the chain carries Omega-N-methylarginine.

The protein belongs to the protein-tyrosine phosphatase family. Non-receptor class myotubularin subfamily. Expressed in various tissues, including heart, skeletal muscle, placenta, liver, lung, kidney and pancreas.

Its subcellular location is the cytoplasm. It catalyses the reaction a 1,2-diacyl-sn-glycero-3-phospho-(1D-myo-inositol-3,5-bisphosphate) + H2O = a 1,2-diacyl-sn-glycero-3-phospho-(1D-myo-inositol-5-phosphate) + phosphate. The enzyme catalyses a 1,2-diacyl-sn-glycero-3-phospho-(1D-myo-inositol-3-phosphate) + H2O = a 1,2-diacyl-sn-glycero-3-phospho-(1D-myo-inositol) + phosphate. Lipid phosphatase that specifically dephosphorylates the D-3 position of phosphatidylinositol 3-phosphate and phosphatidylinositol 3,5-bisphosphate, generating phosphatidylinositol and phosphatidylinositol 5-phosphate. The protein is Phosphatidylinositol-3,5-bisphosphate 3-phosphatase MTMR14 of Homo sapiens (Human).